Here is a 118-residue protein sequence, read N- to C-terminus: Large ribosomal subunit protein uL24 (118 aa).

It belongs to the universal ribosomal protein uL24 family. In terms of assembly, part of the 50S ribosomal subunit.

Functionally, one of two assembly initiator proteins, it binds directly to the 5'-end of the 23S rRNA, where it nucleates assembly of the 50S subunit. One of the proteins that surrounds the polypeptide exit tunnel on the outside of the subunit. This Prochlorococcus marinus (strain MIT 9301) protein is Large ribosomal subunit protein uL24.